The chain runs to 1002 residues: Leucine-rich repeat receptor-like serine/threonine-protein kinase BAM2 (1002 aa).

The signal sequence occupies residues 1–22 (MKLLLLLLLLLLLHISHSFTVA). The Extracellular segment spans residues 23–636 (KPITELHALL…SHVKPLSATT (614 aa)). N-linked (GlcNAc...) asparagine glycans are attached at residues asparagine 51, asparagine 80, asparagine 97, asparagine 123, asparagine 130, asparagine 153, and asparagine 164. LRR repeat units follow at residues 68 to 92 (LRHV…VAHL), 93 to 116 (PLLQ…ISNL), 118 to 140 (ELRH…LSSG), 141 to 165 (LVNL…LTNL), 167 to 188 (QLRH…TYGT), 189 to 213 (WPVL…IGNL), 215 to 238 (TLRE…IGNL), 239 to 262 (SELV…IGKL), 263 to 285 (QKLD…ELGL), 286 to 309 (ISSL…SFSQ), 311 to 334 (KNLT…IGEM), 335 to 358 (PELE…LGEN), 359 to 382 (GRLV…MCSG), 384 to 406 (RLMT…LGKC), 407 to 430 (ESLT…LFGL), 431 to 456 (PKLS…GVSG), 458 to 479 (LGQI…IGNL), 480 to 503 (SGVQ…IGRL), 505 to 527 (QLSK…ISRC), 528 to 551 (KLLT…LTGM), 552 to 575 (KILN…IASM), and 577 to 600 (SLTS…QFSY). N-linked (GlcNAc...) asparagine glycans are attached at residues asparagine 212 and asparagine 237. Asparagine 312 and asparagine 346 each carry an N-linked (GlcNAc...) asparagine glycan. An N-linked (GlcNAc...) asparagine glycan is attached at asparagine 420. Asparagine 478 carries an N-linked (GlcNAc...) asparagine glycan. Asparagine 558, asparagine 587, and asparagine 602 each carry an N-linked (GlcNAc...) asparagine glycan. The helical transmembrane segment at 637 to 657 (KLLLVLGLLFCSMVFAIVAII) threads the bilayer. The Cytoplasmic portion of the chain corresponds to 658-1002 (KARSLRNASE…SGSPPDLLSN (345 aa)). The residue at position 682 (threonine 682) is a Phosphothreonine. Positions 690–967 (LKEDNIIGKG…VQILTEIPKI (278 aa)) constitute a Protein kinase domain. ATP contacts are provided by residues 696–704 (IGKGGAGIV) and lysine 718. Tyrosine 765 and tyrosine 803 each carry phosphotyrosine. The Proton acceptor role is filled by aspartate 816. Serine 851 carries the phosphoserine modification. Tyrosine 859 and tyrosine 866 each carry phosphotyrosine. Threonine 867 is subject to Phosphothreonine. The tract at residues 969-1002 (LSKQQAAESDVTEKAPAINESSPDSGSPPDLLSN) is disordered. The segment covering 989–1002 (SSPDSGSPPDLLSN) has biased composition (low complexity).

Belongs to the protein kinase superfamily. Ser/Thr protein kinase family. As to quaternary structure, interacts with BAM1 and CLV1. Binds to the CLV3, CLE11, CLE18, CLE19, CLE22, CLE25, CLE26, CLE40, CLE41 and CLE42 mature peptides, probably via its extracellular leucine-rich repeat region. In terms of tissue distribution, expressed in seedlings, roots, rosette leaves, stems, inflorescences, flowers and siliques.

It localises to the cell membrane. The enzyme catalyses L-seryl-[protein] + ATP = O-phospho-L-seryl-[protein] + ADP + H(+). The catalysed reaction is L-threonyl-[protein] + ATP = O-phospho-L-threonyl-[protein] + ADP + H(+). In terms of biological role, necessary for male gametophyte development, as well as ovule specification and function. Involved in cell-cell communication process required during early anther development, and regulating cell division and differentiation to organize cell layers. Required for the development of high-ordered vascular strands within the leaf and a correlated control of leaf shape, size and symmetry. May regulate the CLV1-dependent CLV3-mediated signaling in meristems maintenance. This chain is Leucine-rich repeat receptor-like serine/threonine-protein kinase BAM2 (BAM2), found in Arabidopsis thaliana (Mouse-ear cress).